Consider the following 228-residue polypeptide: 2,3-bisphosphoglycerate-dependent phosphoglycerate mutase (228 aa).

Residues 8–15, 21–22, R60, 87–90, K98, 114–115, and 180–181 each bind substrate; these read RHGQSEWN, TG, ERHY, RR, and GN. H9 (tele-phosphohistidine intermediate) is an active-site residue. E87 serves as the catalytic Proton donor/acceptor.

It belongs to the phosphoglycerate mutase family. BPG-dependent PGAM subfamily. As to quaternary structure, homodimer.

It catalyses the reaction (2R)-2-phosphoglycerate = (2R)-3-phosphoglycerate. It functions in the pathway carbohydrate degradation; glycolysis; pyruvate from D-glyceraldehyde 3-phosphate: step 3/5. Functionally, catalyzes the interconversion of 2-phosphoglycerate and 3-phosphoglycerate. This Zymomonas mobilis subsp. mobilis (strain ATCC 31821 / ZM4 / CP4) protein is 2,3-bisphosphoglycerate-dependent phosphoglycerate mutase.